The primary structure comprises 342 residues: UDP-3-O-(3-hydroxymyristoyl)glucosamine N-acyltransferase (342 aa).

H239 acts as the Proton acceptor in catalysis.

Belongs to the transferase hexapeptide repeat family. LpxD subfamily. As to quaternary structure, homotrimer.

The enzyme catalyses a UDP-3-O-[(3R)-3-hydroxyacyl]-alpha-D-glucosamine + a (3R)-hydroxyacyl-[ACP] = a UDP-2-N,3-O-bis[(3R)-3-hydroxyacyl]-alpha-D-glucosamine + holo-[ACP] + H(+). It catalyses the reaction UDP-3-O-[(3R)-3-hydroxytetradecanoyl]-alpha-D-glucosamine + (3R)-hydroxytetradecanoyl-[ACP] = UDP-2-N,3-O-bis[(3R)-3-hydroxytetradecanoyl]-alpha-D-glucosamine + holo-[ACP] + H(+). It functions in the pathway glycolipid biosynthesis; lipid IV(A) biosynthesis; lipid IV(A) from (3R)-3-hydroxytetradecanoyl-[acyl-carrier-protein] and UDP-N-acetyl-alpha-D-glucosamine: step 3/6. Catalyzes the N-acylation of UDP-3-O-(hydroxytetradecanoyl)glucosamine using 3-hydroxytetradecanoyl-ACP as the acyl donor. Is involved in the biosynthesis of lipid A, a phosphorylated glycolipid that anchors the lipopolysaccharide to the outer membrane of the cell. The sequence is that of UDP-3-O-(3-hydroxymyristoyl)glucosamine N-acyltransferase from Photorhabdus laumondii subsp. laumondii (strain DSM 15139 / CIP 105565 / TT01) (Photorhabdus luminescens subsp. laumondii).